An 88-amino-acid polypeptide reads, in one-letter code: Small ribosomal subunit protein uS15 (88 aa).

Belongs to the universal ribosomal protein uS15 family. As to quaternary structure, part of the 30S ribosomal subunit. Forms a bridge to the 50S subunit in the 70S ribosome, contacting the 23S rRNA.

In terms of biological role, one of the primary rRNA binding proteins, it binds directly to 16S rRNA where it helps nucleate assembly of the platform of the 30S subunit by binding and bridging several RNA helices of the 16S rRNA. Functionally, forms an intersubunit bridge (bridge B4) with the 23S rRNA of the 50S subunit in the ribosome. The polypeptide is Small ribosomal subunit protein uS15 (Hydrogenovibrio crunogenus (strain DSM 25203 / XCL-2) (Thiomicrospira crunogena)).